The primary structure comprises 408 residues: 8-amino-7-oxononanoate synthase (408 aa).

Residue R20 participates in substrate binding. Residue 117 to 118 (GY) coordinates pyridoxal 5'-phosphate. H142 lines the substrate pocket. Residues S188, H216, and T244 each contribute to the pyridoxal 5'-phosphate site. K247 carries the N6-(pyridoxal phosphate)lysine modification. T367 contacts substrate.

It belongs to the class-II pyridoxal-phosphate-dependent aminotransferase family. BioF subfamily. In terms of assembly, homodimer. The cofactor is pyridoxal 5'-phosphate.

The enzyme catalyses 6-carboxyhexanoyl-[ACP] + L-alanine + H(+) = (8S)-8-amino-7-oxononanoate + holo-[ACP] + CO2. Its pathway is cofactor biosynthesis; biotin biosynthesis. Its function is as follows. Catalyzes the decarboxylative condensation of pimeloyl-[acyl-carrier protein] and L-alanine to produce 8-amino-7-oxononanoate (AON), [acyl-carrier protein], and carbon dioxide. This chain is 8-amino-7-oxononanoate synthase, found in Cupriavidus pinatubonensis (strain JMP 134 / LMG 1197) (Cupriavidus necator (strain JMP 134)).